The chain runs to 96 residues: Putative septation protein SpoVG (96 aa).

The protein belongs to the SpoVG family.

Could be involved in septation. This chain is Putative septation protein SpoVG, found in Oceanobacillus iheyensis (strain DSM 14371 / CIP 107618 / JCM 11309 / KCTC 3954 / HTE831).